Here is a 189-residue protein sequence, read N- to C-terminus: FAS1 domain-containing protein mug57 (189 aa).

A signal peptide spans 1–24; the sequence is MMKLFCLNIFRFLYTTSFISAVLS. The FAS1 domain occupies 37–182; the sequence is EPRLFELLAE…GEMWVLNATL (146 aa).

It localises to the cytoplasm. The protein localises to the nucleus. The protein resides in the membrane. In terms of biological role, has a role in sporulation. This Schizosaccharomyces pombe (strain 972 / ATCC 24843) (Fission yeast) protein is FAS1 domain-containing protein mug57 (mug57).